The primary structure comprises 294 residues: Protein farnesyltransferase/geranylgeranyltransferase type-1 subunit alpha (294 aa).

PFTA repeat units follow at residues 57 to 91 (YSLRALNLTGFLIMNNPAHYTVWAYRFQILNHTPS), 92 to 125 (YIDNELEWLDEIAEDFQKNYQVWHHRQKILSLTK), 126 to 160 (NYERELEFTKKMFEIDSKNYHVWSYRVWILQNFND), 161 to 194 (YSQELKLTNELLEKDIYNNSAWNHRFYVLFETSK), and 199 to 233 (SLEEELNYLKDKILFAPDNQSAWNYLCGVLDKSGP).

It belongs to the protein prenyltransferase subunit alpha family. Heterodimer of an alpha(cwp1) and a beta(cpp1 or cwg2) subunit. It depends on Mg(2+) as a cofactor.

The enzyme catalyses L-cysteinyl-[protein] + (2E,6E)-farnesyl diphosphate = S-(2E,6E)-farnesyl-L-cysteinyl-[protein] + diphosphate. The catalysed reaction is geranylgeranyl diphosphate + L-cysteinyl-[protein] = S-geranylgeranyl-L-cysteinyl-[protein] + diphosphate. Catalyzes the transfer of a farnesyl or geranyl-geranyl moiety from farnesyl or geranyl-geranyl diphosphate to a cysteine at the fourth position from the C-terminus of several proteins having the C-terminal sequence Cys-aliphatic-aliphatic-X. The alpha(cwp1) subunit is thought to participate in a stable complex with the substrate. The beta(cpp1 or cwg2) subunits bind the peptide substrate. This is Protein farnesyltransferase/geranylgeranyltransferase type-1 subunit alpha (cwp1) from Schizosaccharomyces pombe (strain 972 / ATCC 24843) (Fission yeast).